Here is a 120-residue protein sequence, read N- to C-terminus: Small ribosomal subunit protein uS11 (120 aa).

The protein belongs to the universal ribosomal protein uS11 family. In terms of assembly, part of the 30S ribosomal subunit. Interacts with proteins S7 and S18. Binds to IF-3.

Its function is as follows. Located on the platform of the 30S subunit, it bridges several disparate RNA helices of the 16S rRNA. Forms part of the Shine-Dalgarno cleft in the 70S ribosome. In Neorickettsia sennetsu (strain ATCC VR-367 / Miyayama) (Ehrlichia sennetsu), this protein is Small ribosomal subunit protein uS11.